A 131-amino-acid polypeptide reads, in one-letter code: Small ribosomal subunit protein uS8 (131 aa).

It belongs to the universal ribosomal protein uS8 family. Part of the 30S ribosomal subunit. Contacts proteins S5 and S12.

In terms of biological role, one of the primary rRNA binding proteins, it binds directly to 16S rRNA central domain where it helps coordinate assembly of the platform of the 30S subunit. The chain is Small ribosomal subunit protein uS8 from Thermodesulfovibrio yellowstonii (strain ATCC 51303 / DSM 11347 / YP87).